A 222-amino-acid polypeptide reads, in one-letter code: Proteoglycan 3 (222 aa).

The N-terminal stretch at 1–17 is a signal peptide; that stretch reads MKQPLILSFLLLGMVSA. Residues 27 to 46 are compositionally biased toward basic and acidic residues; it reads NPKREESLKQEADGSREQGR. The interval 27–100 is disordered; it reads NPKREESLKQ…PKEEDTTHFQ (74 aa). A compositionally biased stretch (acidic residues) spans 71–81; the sequence is FEDEEAMESDP. A compositionally biased stretch (basic and acidic residues) spans 83 to 97; sequence ALNKDSACPKEEDTT. A C-type lectin domain is found at 105–221; that stretch reads CKSCNYVLVR…CKSHLPFICS (117 aa). 2 disulfides stabilise this stretch: Cys126/Cys220 and Cys197/Cys212.

Expressed in bone marrow, spleen, and thymus. Not detected in heart, liver or lung.

Possesses similar cytotoxic and cytostimulatory activities to PRG2/MBP. The protein is Proteoglycan 3 of Mus musculus (Mouse).